The following is a 309-amino-acid chain: Dicarboxylate carrier UCP2 (309 aa).

At Met-1–Lys-16 the chain is on the mitochondrial intermembrane side. Solcar repeat units lie at residues Pro-11–Phe-106, Ala-114–Thr-203, and Asp-212–Ala-297. Positions Lys-16–Leu-63 are important for interaction with long-chain fatty acids. The chain crosses the membrane as a helical span at residues Phe-17–Arg-40. The Mitochondrial matrix portion of the chain corresponds to Leu-41 to Ser-77. Residues Leu-78–Val-103 form a helical membrane-spanning segment. Over Lys-104–Arg-119 the chain is Mitochondrial intermembrane. A helical membrane pass occupies residues Leu-120–Gln-145. The Mitochondrial matrix segment spans residues Ala-146–Arg-173. A helical membrane pass occupies residues Gly-174–Leu-199. Topologically, residues Ile-200–His-217 are mitochondrial intermembrane. The chain crosses the membrane as a helical span at residues Phe-218–Tyr-242. Residues Met-243–Ala-268 are Mitochondrial matrix-facing. Residues Phe-269–Leu-294 traverse the membrane as a helical segment. Positions Leu-278–Val-285 are important for interaction with long-chain fatty acids. Residues Lys-295–Phe-309 are Mitochondrial intermembrane-facing.

Belongs to the mitochondrial carrier (TC 2.A.29) family. As to quaternary structure, homotetramer. Adopts an asymmetrical dimer of dimers functional form. Interacts with MICU1 (when methylated); leading to decrease the calcium sensitivity of MICU1. As to expression, widely expressed. Highest in spleen, lung, white and brown adipose tissues. 4-6 times higher levels are detected in white adipose tissue of ob/ob and db/db mice when compared to lean littermates. Expressed in neurons of the ventromedial nucleus of the hypothalamus (at protein level). Expressed in thymocytes (at protein level).

The protein localises to the mitochondrion inner membrane. It carries out the reaction L-aspartate(out) + phosphate(in) + H(+)(in) = L-aspartate(in) + phosphate(out) + H(+)(out). The enzyme catalyses oxaloacetate(out) + phosphate(in) + H(+)(in) = oxaloacetate(in) + phosphate(out) + H(+)(out). It catalyses the reaction (S)-malate(out) + phosphate(in) + H(+)(in) = (S)-malate(in) + phosphate(out) + H(+)(out). The catalysed reaction is malonate(out) + phosphate(in) + H(+)(in) = malonate(in) + phosphate(out) + H(+)(out). It carries out the reaction sulfate(out) + phosphate(in) + H(+)(in) = sulfate(in) + phosphate(out) + H(+)(out). The enzyme catalyses (S)-malate(out) = (S)-malate(in). It catalyses the reaction L-aspartate(out) = L-aspartate(in). The catalysed reaction is phosphate(in) = phosphate(out). It carries out the reaction chloride(in) = chloride(out). The enzyme catalyses H(+)(in) = H(+)(out). It catalyses the reaction a long-chain fatty acid(out) = a long-chain fatty acid(in). With respect to regulation, proton conductance is activated by free long-chain fatty acids and allosterically inhibited by purine nucleotides. Could be constitutively inhibited by GDP. Its function is as follows. Antiporter that exports dicarboxylate intermediates of the Krebs cycle in exchange for phosphate plus a proton across the inner membrane of mitochondria, a process driven by mitochondrial motive force with an overall impact on glycolysis, glutaminolysis and glutathione-dependent redox balance. Continuous export of oxaloacetate and related four-carbon dicarboxylates from mitochondrial matrix into the cytosol negatively regulates the oxidation of acetyl-CoA substrates via the Krebs cycle lowering the ATP/ADP ratio and reactive oxygen species (ROS) production. May mediate inducible proton entry into the mitochondrial matrix affecting ATP turnover as a protection mechanism against oxidative stress. The proton currents are most likely associated with fatty acid flipping across the inner membrane of mitochondria in a metabolic process regulated by free fatty acids and purine nucleotides. Regulates the use of glucose as a source of energy. Required for glucose-induced DRP1-dependent mitochondrial fission and neuron activation in the ventromedial nucleus of the hypothalamus (VMH). This mitochondrial adaptation mechanism modulates the VMH pool of glucose-excited neurons with an impact on systemic glucose homeostasis. Regulates ROS levels and metabolic reprogramming of macrophages during the resolution phase of inflammation. Attenuates ROS production in response to IL33 to preserve the integrity of the Krebs cycle required for persistent production of itaconate and subsequent GATA3-dependent differentiation of inflammation-resolving alternatively activated macrophages. Can unidirectionally transport anions including L-malate, L-aspartate, phosphate and chloride ions. Does not mediate adaptive thermogenesis. The chain is Dicarboxylate carrier UCP2 (Ucp2) from Mus musculus (Mouse).